We begin with the raw amino-acid sequence, 96 residues long: Large ribosomal subunit protein eL43 (96 aa).

Residues Cys-41–Cys-62 form a C4-type zinc finger.

Belongs to the eukaryotic ribosomal protein eL43 family. Zn(2+) is required as a cofactor.

The protein is Large ribosomal subunit protein eL43 of Methanococcus maripaludis (strain C6 / ATCC BAA-1332).